The sequence spans 106 residues: Small ribosomal subunit protein uS10 (106 aa).

This sequence belongs to the universal ribosomal protein uS10 family. As to quaternary structure, part of the 30S ribosomal subunit.

Functionally, involved in the binding of tRNA to the ribosomes. This chain is Small ribosomal subunit protein uS10, found in Mycoplasma genitalium (strain ATCC 33530 / DSM 19775 / NCTC 10195 / G37) (Mycoplasmoides genitalium).